The chain runs to 1609 residues: Chitin synthase 5 (1609 aa).

Disordered stretches follow at residues 1-188, 248-280, and 294-320; these read MNPF…DRER, SGLGVTGPTNVPPGGLGRAPPLRRGKSLLGRDE, and VSLRRKQSKSGNKPSKEVPRDLGESKT. Residues 1–326 lie on the Cytoplasmic side of the membrane; that stretch reads MNPFESLPDA…ESKTSRIAPG (326 aa). The segment covering 34-44 has biased composition (polar residues); it reads PGSTGRPQNPI. Residues 61–82 show a composition bias toward low complexity; the sequence is PQQQQQQQQQQQQQQQRSQQPF. Residues 100–111 show a composition bias toward polar residues; the sequence is AYLNSTSSQPTQ. Residues 134–146 are compositionally biased toward basic and acidic residues; that stretch reads DSVKSYGDDKRSI. A compositionally biased stretch (polar residues) spans 147 to 163; it reads NDPNSSSTALTQVNSLD. The span at 253–267 shows a compositional bias: low complexity; that stretch reads TGPTNVPPGGLGRAP. The span at 307–320 shows a compositional bias: basic and acidic residues; sequence PSKEVPRDLGESKT. The chain crosses the membrane as a helical span at residues 327-347; that stretch reads PVGGWMIYCYILTICCPGPFL. Residues 348-364 lie on the Extracellular side of the membrane; the sequence is RIFGIRTPEQQRAWREK. A helical transmembrane segment spans residues 365–385; it reads MGLIGIITLIMAAVGFLTFGF. Residues 386-624 lie on the Cytoplasmic side of the membrane; that stretch reads TQTVCGQQPD…ASKVELYLSL (239 aa). The helical transmembrane segment at 625–645 threads the bilayer; that stretch reads VFIIGVVAIKFFMAVMFGWFI. At 646–1176 the chain is on the extracellular side; sequence SWRLGNYANE…MRFVVFMELT (531 aa). Asparagine 654 is a glycosylation site (N-linked (GlcNAc...) asparagine). Residues 729–767 are disordered; it reads GVASPLGGSPPGSPSVAGGRSSASLAPAHSRRSSFSGSP. The span at 742-752 shows a compositional bias: low complexity; it reads PSVAGGRSSAS. N-linked (GlcNAc...) asparagine glycans are attached at residues asparagine 1015 and asparagine 1144. The chain crosses the membrane as a helical span at residues 1177–1197; that stretch reads GTLVLPAAIAFTLYVVVQAFL. The Cytoplasmic segment spans residues 1198-1202; it reads PNVPT. Residues 1203–1223 traverse the membrane as a helical segment; sequence PTIPLILLALILGLPGILIVV. Topologically, residues 1224–1227 are extracellular; it reads TSRK. The chain crosses the membrane as a helical span at residues 1228–1248; the sequence is IAYVGWMLIYLLSLPIWNFVL. The Cytoplasmic portion of the chain corresponds to 1249 to 1609; that stretch reads PLYAYWHMDD…PPGAAPPSFD (361 aa). 2 disordered regions span residues 1354–1381 and 1399–1609; these read PNAMSSSSASQFGPDVSEVSHSKSPSGA and TDAK…PSFD. 2 stretches are compositionally biased toward polar residues: residues 1502 to 1514 and 1530 to 1552; these read NVSTEQRYPTVSE and GSASPTPAQQGFNAANSNQQTRP. Low complexity predominate over residues 1568-1588; sequence AQGVRQVQRGARRSQMPNSAA.

It belongs to the chitin synthase family. Class IV subfamily.

The protein resides in the cell membrane. Its subcellular location is the cytoplasmic vesicle membrane. The catalysed reaction is [(1-&gt;4)-N-acetyl-beta-D-glucosaminyl](n) + UDP-N-acetyl-alpha-D-glucosamine = [(1-&gt;4)-N-acetyl-beta-D-glucosaminyl](n+1) + UDP + H(+). Polymerizes chitin, a structural polymer of the cell wall and septum, by transferring the sugar moiety of UDP-GlcNAc to the non-reducing end of the growing chitin polymer. The polypeptide is Chitin synthase 5 (Mycosarcoma maydis (Corn smut fungus)).